A 181-amino-acid chain; its full sequence is Akirin-2 (181 aa).

A disordered region spans residues 18–48 (SPAASPKRRRCAPLSPSGPSPQKYLRLEPSP). Residues 23–28 (PKRRRC) carry the Nuclear localization signal motif. Residues 178–181 (SYVS) carry the SYVS motif motif.

The protein belongs to the akirin family. In terms of assembly, homodimer. Interacts with actl6a/baf53a. Interacts with gmnn.

It is found in the nucleus. Molecular adapter that acts as a bridge between a variety of multiprotein complexes, and which is involved in embryonic development, immunity, myogenesis and brain development. Plays a key role in nuclear protein degradation by promoting import of proteasomes into the nucleus: acts by bridging fully assembled 20S proteasomes with nuclear import receptor ipo9. Involved in both neural precursor maintenance and terminal neural differentiation: bridges gmnn and actl6a/baf53a in neural progenitor cells, antagonizing the activity of gmnn, thereby suppressing sox2 expression. Also required for proper activation of neurod1 and neuronal differentiation. Involved in myogenesis: required for skeletal muscle formation and skeletal development, possibly by regulating expression of muscle differentiation factors. This Xenopus laevis (African clawed frog) protein is Akirin-2.